The sequence spans 102 residues: MAKGQSLQDPFLNALRRERVPVSIYLVNGIKLQGQIESFDQFVILLKNTVSQMVYKHAISTVVPSRPVSHHSNTPSGGTSNYHHGNNPSAPQQPQQESDDAE.

The 60-residue stretch at 9–68 folds into the Sm domain; the sequence is DPFLNALRRERVPVSIYLVNGIKLQGQIESFDQFVILLKNTVSQMVYKHAISTVVPSRPV. The segment at 64–102 is disordered; it reads PSRPVSHHSNTPSGGTSNYHHGNNPSAPQQPQQESDDAE. Residues 70–96 are compositionally biased toward polar residues; the sequence is HHSNTPSGGTSNYHHGNNPSAPQQPQQ.

Belongs to the Hfq family. In terms of assembly, homohexamer.

In terms of biological role, RNA chaperone that binds small regulatory RNA (sRNAs) and mRNAs to facilitate mRNA translational regulation in response to envelope stress, environmental stress and changes in metabolite concentrations. Also binds with high specificity to tRNAs. The protein is RNA-binding protein Hfq of Serratia proteamaculans (strain 568).